The following is a 166-amino-acid chain: MNAVRRKKLMWVMFTLAGAVIAVALVIYAIGKQTDYYFDATAIAQGEAPQDKRIRAGGMVVAGSVQRAPNDPLSVEFAITDFQSTVPVTYQGILPDLFAENSGVVATGKMQGDIFVAGEVLAKHDENYMPPEVAKSMKENNRSGAVPSSEQYNPAEKLHETKTLQQ.

The Cytoplasmic segment spans residues 1 to 8; the sequence is MNAVRRKK. The chain crosses the membrane as a helical; Signal-anchor for type II membrane protein span at residues 9–29; the sequence is LMWVMFTLAGAVIAVALVIYA. At 30 to 166 the chain is on the periplasmic side; sequence IGKQTDYYFD…KLHETKTLQQ (137 aa). 2 residues coordinate heme: His-124 and Tyr-128. Residues 133 to 166 form a disordered region; it reads VAKSMKENNRSGAVPSSEQYNPAEKLHETKTLQQ. Over residues 142 to 152 the composition is skewed to polar residues; it reads RSGAVPSSEQY. Over residues 156–166 the composition is skewed to basic and acidic residues; the sequence is EKLHETKTLQQ.

The protein belongs to the CcmE/CycJ family.

The protein resides in the cell inner membrane. Heme chaperone required for the biogenesis of c-type cytochromes. Transiently binds heme delivered by CcmC and transfers the heme to apo-cytochromes in a process facilitated by CcmF and CcmH. The sequence is that of Cytochrome c-type biogenesis protein CcmE from Psychrobacter arcticus (strain DSM 17307 / VKM B-2377 / 273-4).